The chain runs to 357 residues: MAKKPALTPEEMRREALSTALSTIERKYGQGSVMKLSDTAHVNIPVIPTGSIGLDLALGVGGIPRGRVSEIYGPESSGKTTLALHIIAECQKLGGTAAFIDAEHALDTNYARRLGVKTDELLISQPDFGEQALDIADMLVRSSAVDIVVIDSVAALIPQAELEGVMGEMQVGGQARLMSHALRKLTGTIHKSRTAVIFINQIRMKIGTMGYGNPETTTGGNALKFYSSIRMDIRKIQTLKDKEEVYGSRTRVKVVKNKVAPPFREALFDILYGTGISRTGELIDLGSDVGIIEKSGSWFAFGSERLGQGKENVRALLEENEALRLNVEAKLIEHLGMMPSKVVDPDDNAGAMDDDEF.

73–80 (GPESSGKT) lines the ATP pocket.

Belongs to the RecA family.

It localises to the cytoplasm. Can catalyze the hydrolysis of ATP in the presence of single-stranded DNA, the ATP-dependent uptake of single-stranded DNA by duplex DNA, and the ATP-dependent hybridization of homologous single-stranded DNAs. It interacts with LexA causing its activation and leading to its autocatalytic cleavage. This Nitratidesulfovibrio vulgaris (strain DSM 19637 / Miyazaki F) (Desulfovibrio vulgaris) protein is Protein RecA.